We begin with the raw amino-acid sequence, 150 residues long: Myosin, essential light chain (150 aa).

2 EF-hand domains span residues 3–38 (ASAD…LGKS) and 75–110 (EQQK…LGDY). Ca(2+) is bound by residues aspartate 16, aspartate 18, aspartate 20, lysine 22, and aspartate 27.

Myosin is a hexamer of 2 heavy chains and 4 light chains (two regulatory light chains and two essential light chains).

The polypeptide is Myosin, essential light chain (mlcE) (Dictyostelium discoideum (Social amoeba)).